Reading from the N-terminus, the 135-residue chain is Transcription antitermination protein NusB (135 aa).

It belongs to the NusB family.

Its function is as follows. Involved in transcription antitermination. Required for transcription of ribosomal RNA (rRNA) genes. Binds specifically to the boxA antiterminator sequence of the ribosomal RNA (rrn) operons. In Clostridium perfringens (strain ATCC 13124 / DSM 756 / JCM 1290 / NCIMB 6125 / NCTC 8237 / Type A), this protein is Transcription antitermination protein NusB.